The chain runs to 223 residues: Sugar fermentation stimulation protein homolog (223 aa).

It belongs to the SfsA family.

In Thermosipho melanesiensis (strain DSM 12029 / CIP 104789 / BI429), this protein is Sugar fermentation stimulation protein homolog.